Consider the following 171-residue polypeptide: T-cell surface glycoprotein CD3 delta chain (171 aa).

Positions 1–21 (MEHSRFLSGLILAAFLSRVSP) are cleaved as a signal peptide. Over 22-104 (YEVEMEELED…NCVELDSATL (83 aa)) the chain is Extracellular. C37 and C72 are oxidised to a cystine. N38 is a glycosylation site (N-linked (GlcNAc...) asparagine). A helical membrane pass occupies residues 105–125 (AGIIVTDIIATLLLALGVYCF). Residues 126–171 (AGHEMGRFSRAADTQDLLRNDQLYQPLRDRNDGQYSRLGENWARNK) are Cytoplasmic-facing. The 29-residue stretch at 138-166 (DTQDLLRNDQLYQPLRDRNDGQYSRLGEN) folds into the ITAM domain. Y149 and Y160 each carry phosphotyrosine.

The TCR-CD3 complex is composed of a CD3D/CD3E and a CD3G/CD3E heterodimers that preferentially associate with TCRalpha and TCRbeta, respectively, to form TCRalpha/CD3E/CD3G and TCRbeta/CD3G/CD3E trimers. In turn, the hexamer interacts with CD3Z homodimer to form the TCR-CD3 complex. Alternatively, TCRalpha and TCRbeta can be replaced by TCRgamma and TCRdelta. Interacts with coreceptors CD4 and CD8. Post-translationally, phosphorylated on Tyr residues after T-cell receptor triggering by LCK in association with CD4/CD8. As to expression, CD3D is mostly present on T-lymphocytes with its TCR-CD3 partners. Present also in fetal NK-cells.

The protein resides in the cell membrane. Part of the TCR-CD3 complex present on T-lymphocyte cell surface that plays an essential role in adaptive immune response. When antigen presenting cells (APCs) activate T-cell receptor (TCR), TCR-mediated signals are transmitted across the cell membrane by the CD3 chains CD3D, CD3E, CD3G and CD3Z. All CD3 chains contain immunoreceptor tyrosine-based activation motifs (ITAMs) in their cytoplasmic domain. Upon TCR engagement, these motifs become phosphorylated by Src family protein tyrosine kinases LCK and FYN, resulting in the activation of downstream signaling pathways. In addition of this role of signal transduction in T-cell activation, CD3D plays an essential role in thymocyte differentiation. Indeed, participates in correct intracellular TCR-CD3 complex assembly and surface expression. In absence of a functional TCR-CD3 complex, thymocytes are unable to differentiate properly. Interacts with CD4 and CD8 and thus serves to establish a functional link between the TCR and coreceptors CD4 and CD8, which is needed for activation and positive selection of CD4 or CD8 T-cells. This chain is T-cell surface glycoprotein CD3 delta chain (CD3D), found in Sus scrofa (Pig).